The following is a 275-amino-acid chain: Undecaprenyl-diphosphatase (275 aa).

Transmembrane regions (helical) follow at residues 1-21 (MDWV…FLPI), 42-62 (VKDA…LVYY), 80-100 (TLWT…LAFG), 107-127 (LFKP…MWLI), 147-167 (SLLI…SRSA), 184-204 (TKFS…LNLV), 214-234 (IGLL…YLAI), and 249-269 (FAVY…TGVM).

This sequence belongs to the UppP family.

The protein localises to the cell membrane. The enzyme catalyses di-trans,octa-cis-undecaprenyl diphosphate + H2O = di-trans,octa-cis-undecaprenyl phosphate + phosphate + H(+). In terms of biological role, catalyzes the dephosphorylation of undecaprenyl diphosphate (UPP). Confers resistance to bacitracin. This is Undecaprenyl-diphosphatase from Deinococcus deserti (strain DSM 17065 / CIP 109153 / LMG 22923 / VCD115).